Consider the following 267-residue polypeptide: Taurine import ATP-binding protein TauB (267 aa).

The ABC transporter domain maps to 6 to 238 (FNEASLIYPA…DILAGAPASE (233 aa)). 43-50 (GRSGSGKT) lines the ATP pocket.

It belongs to the ABC transporter superfamily. Taurine importer (TC 3.A.1.17.1) family. The complex is composed of two ATP-binding proteins (TauB), two transmembrane proteins (TauC) and a solute-binding protein (TauA).

The protein localises to the cell inner membrane. The catalysed reaction is taurine(out) + ATP + H2O = taurine(in) + ADP + phosphate + H(+). Functionally, part of the ABC transporter complex TauABC involved in taurine import. Responsible for energy coupling to the transport system. The sequence is that of Taurine import ATP-binding protein TauB from Sinorhizobium fredii (strain NBRC 101917 / NGR234).